A 365-amino-acid chain; its full sequence is Zinc finger TRAF-type-containing protein 1-A (365 aa).

Positions 1 to 56 are disordered; that stretch reads MSEEREAPGPLASSSAGLGAEVGQEEVPGGAGPARLLLLPSDSDGPPKKRLRSEAE. The RING-type; degenerate zinc finger occupies 72–117; that stretch reads CTVCLDLPKASVYQCTNGHLMCAGCFIHLLADSRLKEEQATCPNCR. Residues 113–186 form a TRAF-type zinc finger; it reads CPNCRCEISK…PWEGPYHELT (74 aa).

This sequence belongs to the ZFTRAF1 family.

It is found in the cytoplasm. The chain is Zinc finger TRAF-type-containing protein 1-A from Xenopus laevis (African clawed frog).